The sequence spans 147 residues: uncharacterized protein (147 aa).

The disordered stretch occupies residues 110 to 133 (VLEPPTPSQPAPTPEPAVKPQPIA). The span at 113–128 (PPTPSQPAPTPEPAVK) shows a compositional bias: pro residues.

This is an uncharacterized protein from Ictalurid herpesvirus 1 (strain Auburn) (IcHV-1).